We begin with the raw amino-acid sequence, 135 residues long: C-type Lectin CRL (135 aa).

4 disulfide bridges follow: Cys-3–Cys-14, Cys-31–Cys-131, Cys-38–Cys-133, and Cys-106–Cys-123. Residues 10–132 (MNGLCYKIFN…CESKDAFLCQ (123 aa)) enclose the C-type lectin domain. Positions 96, 98, 104, 119, and 120 each coordinate Ca(2+). The Galactose-binding motif lies at 96-98 (QPD).

This sequence belongs to the true venom lectin family. In terms of assembly, homodimer; disulfide-linked. In terms of tissue distribution, expressed by the venom gland.

The protein resides in the secreted. In terms of biological role, beta-galactoside and N-acetylgalactosamine (GalNAc) specific C-type lectin. This chain is C-type Lectin CRL, found in Crotalus ruber ruber (Red diamond rattlesnake).